The following is a 270-amino-acid chain: Urease accessory protein UreD (270 aa).

This sequence belongs to the UreD family. In terms of assembly, ureD, UreF and UreG form a complex that acts as a GTP-hydrolysis-dependent molecular chaperone, activating the urease apoprotein by helping to assemble the nickel containing metallocenter of UreC. The UreE protein probably delivers the nickel.

It localises to the cytoplasm. Its function is as follows. Required for maturation of urease via the functional incorporation of the urease nickel metallocenter. The protein is Urease accessory protein UreD of Actinobacillus pleuropneumoniae serotype 7 (strain AP76).